A 214-amino-acid chain; its full sequence is Thioredoxin-like 4, chloroplastic (214 aa).

The span at 1-20 shows a compositional bias: low complexity; it reads MITASLLPLPATSSSSGRRS. Positions 1–68 are disordered; that stretch reads MITASLLPLP…STNGSLPGLP (68 aa). Residues 1-71 constitute a chloroplast transit peptide; it reads MITASLLPLP…GSLPGLPPVV (71 aa). Positions 21-34 are enriched in pro residues; sequence LPPPTTTFPRPPPP. Positions 42–53 are enriched in low complexity; the sequence is SSSSSSASSTES. The 128-residue stretch at 72–199 folds into the Thioredoxin domain; that stretch reads VEEEEEEFCP…IIAAIQKYTA (128 aa). Catalysis depends on nucleophile residues Cys-117 and Cys-120. Residues Cys-117 and Cys-120 are joined by a disulfide bond.

This sequence belongs to the thioredoxin family.

It localises to the plastid. The protein resides in the chloroplast. In terms of biological role, probable thiol-disulfide oxidoreductase that may participate in various redox reactions. This is Thioredoxin-like 4, chloroplastic from Oryza sativa subsp. japonica (Rice).